The sequence spans 165 residues: 3-isopropylmalate dehydratase small subunit (165 aa).

This sequence belongs to the LeuD family. LeuD type 2 subfamily. In terms of assembly, heterodimer of LeuC and LeuD.

It catalyses the reaction (2R,3S)-3-isopropylmalate = (2S)-2-isopropylmalate. It functions in the pathway amino-acid biosynthesis; L-leucine biosynthesis; L-leucine from 3-methyl-2-oxobutanoate: step 2/4. Functionally, catalyzes the isomerization between 2-isopropylmalate and 3-isopropylmalate, via the formation of 2-isopropylmaleate. The sequence is that of 3-isopropylmalate dehydratase small subunit from Lachnoclostridium phytofermentans (strain ATCC 700394 / DSM 18823 / ISDg) (Clostridium phytofermentans).